The primary structure comprises 198 residues: Small ribosomal subunit protein uS4 (198 aa).

The region spanning 88 to 153 is the S4 RNA-binding domain; the sequence is LRLDNVMFRM…AQRYKDILEV (66 aa).

It belongs to the universal ribosomal protein uS4 family. Part of the 30S ribosomal subunit. Contacts protein S5. The interaction surface between S4 and S5 is involved in control of translational fidelity.

In terms of biological role, one of the primary rRNA binding proteins, it binds directly to 16S rRNA where it nucleates assembly of the body of the 30S subunit. Its function is as follows. With S5 and S12 plays an important role in translational accuracy. The chain is Small ribosomal subunit protein uS4 from Lachnoclostridium phytofermentans (strain ATCC 700394 / DSM 18823 / ISDg) (Clostridium phytofermentans).